A 202-amino-acid chain; its full sequence is Small ribosomal subunit protein uS4c (202 aa).

Residues 18–45 (LPGLTRKMAKRKSPPGQHGAASKKPSQY) form a disordered region. The 63-residue stretch at 90–152 (MRLDTTIFRL…SRSRKLIEGY (63 aa)) folds into the S4 RNA-binding domain.

The protein belongs to the universal ribosomal protein uS4 family. Part of the 30S ribosomal subunit. Contacts protein S5. The interaction surface between S4 and S5 is involved in control of translational fidelity.

It is found in the plastid. It localises to the chloroplast. Its function is as follows. One of the primary rRNA binding proteins, it binds directly to 16S rRNA where it nucleates assembly of the body of the 30S subunit. With S5 and S12 plays an important role in translational accuracy. The sequence is that of Small ribosomal subunit protein uS4c (rps4) from Nephroselmis olivacea (Green alga).